The sequence spans 602 residues: Cholinesterase (602 aa).

A signal peptide spans 1-28 (MQSRSTVIYIRFVLWFLLLWVLFEKSHT). 2 N-linked (GlcNAc...) asparagine glycosylation sites follow: asparagine 85 and asparagine 134. 144–145 (GS) is a substrate binding site. Serine 226 functions as the Acyl-ester intermediate in the catalytic mechanism. Serine 226 carries the phosphoserine modification. 2 N-linked (GlcNAc...) asparagine glycosylation sites follow: asparagine 269 and asparagine 284. Glutamate 353 acts as the Charge relay system in catalysis. Asparagine 369 carries N-linked (GlcNAc...) asparagine glycosylation. Histidine 466 acts as the Charge relay system in catalysis. N-linked (GlcNAc...) asparagine glycans are attached at residues asparagine 483, asparagine 509, asparagine 513, and asparagine 514.

Belongs to the type-B carboxylesterase/lipase family. Homotetramer; disulfide-linked. Dimer of dimers. As to expression, present in most cells except erythrocytes.

It is found in the secreted. It carries out the reaction an acylcholine + H2O = a carboxylate + choline + H(+). Functionally, esterase with broad substrate specificity. Contributes to the inactivation of the neurotransmitter acetylcholine. Can degrade neurotoxic organophosphate esters. The sequence is that of Cholinesterase (BCHE) from Bos taurus (Bovine).